We begin with the raw amino-acid sequence, 206 residues long: dITP/XTP pyrophosphatase (206 aa).

Residue 7–12 participates in substrate binding; it reads SSHGYK. Asp70 serves as the catalytic Proton acceptor. Asp70 is a Mg(2+) binding site. Residues Thr71, 154-157, Lys177, and 182-183 contribute to the substrate site; these read FGYD and HR.

The protein belongs to the HAM1 NTPase family. As to quaternary structure, homodimer. Mg(2+) is required as a cofactor.

It carries out the reaction XTP + H2O = XMP + diphosphate + H(+). It catalyses the reaction dITP + H2O = dIMP + diphosphate + H(+). The catalysed reaction is ITP + H2O = IMP + diphosphate + H(+). Functionally, pyrophosphatase that catalyzes the hydrolysis of nucleoside triphosphates to their monophosphate derivatives, with a high preference for the non-canonical purine nucleotides XTP (xanthosine triphosphate), dITP (deoxyinosine triphosphate) and ITP. Seems to function as a house-cleaning enzyme that removes non-canonical purine nucleotides from the nucleotide pool, thus preventing their incorporation into DNA/RNA and avoiding chromosomal lesions. The chain is dITP/XTP pyrophosphatase from Chlamydia abortus (strain DSM 27085 / S26/3) (Chlamydophila abortus).